A 136-amino-acid polypeptide reads, in one-letter code: Beta-hordothionin (136 aa).

The N-terminal stretch at 1-27 is a signal peptide; it reads MGSKGLKGVMVCLLILGLVLEHVQVEG. 4 cysteine pairs are disulfide-bonded: C30-C66, C31-C58, C39-C56, and C43-C52. Positions 73-136 are cleaved as a propeptide — acidic domain; it reads LALVSNSDEP…GDVGLTSLTA (64 aa).

The protein belongs to the plant thionin (TC 1.C.44) family. 4 C-C subfamily. As to quaternary structure, homodimer.

It is found in the secreted. Functionally, thionins are small plant proteins which are toxic to animal cells. They seem to exert their toxic effect at the level of the cell membrane. Their precise function is not known. This chain is Beta-hordothionin (THI1.2), found in Hordeum vulgare (Barley).